Reading from the N-terminus, the 468-residue chain is UDP-N-acetylmuramate--L-alanine ligase (468 aa).

121-127 (GSHGKTT) serves as a coordination point for ATP.

The protein belongs to the MurCDEF family.

The protein resides in the cytoplasm. It catalyses the reaction UDP-N-acetyl-alpha-D-muramate + L-alanine + ATP = UDP-N-acetyl-alpha-D-muramoyl-L-alanine + ADP + phosphate + H(+). It participates in cell wall biogenesis; peptidoglycan biosynthesis. Functionally, cell wall formation. The sequence is that of UDP-N-acetylmuramate--L-alanine ligase from Borrelia garinii subsp. bavariensis (strain ATCC BAA-2496 / DSM 23469 / PBi) (Borreliella bavariensis).